Reading from the N-terminus, the 292-residue chain is Tetrahydromethanopterin:alpha-L-glutamate ligase (292 aa).

The region spanning 103–286 (SFLMEVHKIP…IAQNLIDEAL (184 aa)) is the ATP-grasp domain. ATP is bound by residues K138, 176-188 (QEFV…VYRD), and R204. 3 residues coordinate Mg(2+): D247, E259, and N261. Residues D247, E259, and N261 each coordinate Mn(2+).

This sequence belongs to the RimK family. MptN subfamily. In terms of assembly, homodimer. Mg(2+) serves as cofactor. It depends on Mn(2+) as a cofactor.

It catalyses the reaction 5,6,7,8-tetrahydromethanopterin + L-glutamate + ATP = 5,6,7,8-tetrahydrosarcinapterin + ADP + phosphate + H(+). The protein operates within cofactor biosynthesis; 5,6,7,8-tetrahydrosarcinapterin biosynthesis. In terms of biological role, catalyzes the ATP or GTP-dependent addition of one L-glutamate molecule to tetrahydromethanopterin, producing tetrahydrosarcinapterin. In Methanococcus maripaludis (strain DSM 14266 / JCM 13030 / NBRC 101832 / S2 / LL), this protein is Tetrahydromethanopterin:alpha-L-glutamate ligase (mptN).